A 214-amino-acid chain; its full sequence is 3-demethoxyubiquinol 3-hydroxylase (214 aa).

Fe cation is bound by residues E63, E93, H96, E145, E177, and H180.

Belongs to the COQ7 family. Requires Fe cation as cofactor.

The protein resides in the cell membrane. It carries out the reaction a 5-methoxy-2-methyl-3-(all-trans-polyprenyl)benzene-1,4-diol + AH2 + O2 = a 3-demethylubiquinol + A + H2O. It functions in the pathway cofactor biosynthesis; ubiquinone biosynthesis. Its function is as follows. Catalyzes the hydroxylation of 2-nonaprenyl-3-methyl-6-methoxy-1,4-benzoquinol during ubiquinone biosynthesis. In Psychrobacter arcticus (strain DSM 17307 / VKM B-2377 / 273-4), this protein is 3-demethoxyubiquinol 3-hydroxylase.